The chain runs to 248 residues: Small ribosomal subunit protein uS3 (248 aa).

The KH type-2 domain maps to 39 to 111 (IRKYLNKVYK…EIVFNVVEVK (73 aa)). Residues 222–248 (KPFEASAPRPQRRNRKEANNYVNAKKN) form a disordered region.

The protein belongs to the universal ribosomal protein uS3 family. Part of the 30S ribosomal subunit. Forms a tight complex with proteins S10 and S14.

Its function is as follows. Binds the lower part of the 30S subunit head. Binds mRNA in the 70S ribosome, positioning it for translation. The protein is Small ribosomal subunit protein uS3 of Alteracholeplasma palmae (strain ATCC 49389 / J233) (Acholeplasma palmae).